The following is a 681-amino-acid chain: Pescadillo homolog (681 aa).

Positions 350–469 (TAGALFAPFT…KLLRPDLYAP (120 aa)) constitute a BRCT domain. A disordered region spans residues 489–681 (DPRASLAEQE…RRKLEKGAEK (193 aa)). Residues 491–527 (RASLAEQEEEGEAEIAAEEEEEDSDEEMEEATDGKKV) are a coiled coil. Residues 496–521 (EQEEEGEAEIAAEEEEEDSDEEMEEA) show a composition bias toward acidic residues. The span at 522–533 (TDGKKVDAKAED) shows a compositional bias: basic and acidic residues. Acidic residues-rich tracts occupy residues 534 to 546 (SAEE…DDSV) and 554 to 586 (GTDD…DEEE). A coiled-coil region spans residues 574 to 681 (EEEAASESED…RRKLEKGAEK (108 aa)). Over residues 587–597 (SARTQHQKELE) the composition is skewed to basic and acidic residues. The span at 617–629 (KKSSQAKKVASKK) shows a compositional bias: basic residues. The span at 630–640 (RKEEEELERQK) shows a compositional bias: basic and acidic residues.

It belongs to the pescadillo family. As to quaternary structure, component of the NOP7 complex, composed of erb1, nop7 and ytm1. The complex is held together by erb1, which interacts with nop7 via its N-terminal domain and with ytm1 via a high-affinity interaction between the seven-bladed beta-propeller domains of the 2 proteins. The NOP7 complex associates with the 66S pre-ribosome.

It localises to the nucleus. The protein resides in the nucleolus. It is found in the nucleoplasm. Its function is as follows. Component of the NOP7 complex, which is required for maturation of the 25S and 5.8S ribosomal RNAs and formation of the 60S ribosome. The sequence is that of Pescadillo homolog (nop7) from Aspergillus oryzae (strain ATCC 42149 / RIB 40) (Yellow koji mold).